The primary structure comprises 151 residues: MSEIFVNSIQKNKNDFAMQIAEYIKMSQKFAALKDNVFFNQKIAKAQSIGKDEALKSYDEVYFAHKKGYLIALDERGEMIDSLQFAEILSKNSQISFFIGGAYGLSENFKQKMDKIISLTKLTLAHKIAKLMLFEQIFRGLCINAGHPYHK.

S-adenosyl-L-methionine is bound by residues Leu-73, Gly-100, and 119–124 (LTKLTL).

This sequence belongs to the RNA methyltransferase RlmH family. Homodimer.

It localises to the cytoplasm. The catalysed reaction is pseudouridine(1915) in 23S rRNA + S-adenosyl-L-methionine = N(3)-methylpseudouridine(1915) in 23S rRNA + S-adenosyl-L-homocysteine + H(+). In terms of biological role, specifically methylates the pseudouridine at position 1915 (m3Psi1915) in 23S rRNA. This Campylobacter hominis (strain ATCC BAA-381 / DSM 21671 / CCUG 45161 / LMG 19568 / NCTC 13146 / CH001A) protein is Ribosomal RNA large subunit methyltransferase H.